Consider the following 155-residue polypeptide: SsrA-binding protein (155 aa).

Belongs to the SmpB family.

Its subcellular location is the cytoplasm. In terms of biological role, required for rescue of stalled ribosomes mediated by trans-translation. Binds to transfer-messenger RNA (tmRNA), required for stable association of tmRNA with ribosomes. tmRNA and SmpB together mimic tRNA shape, replacing the anticodon stem-loop with SmpB. tmRNA is encoded by the ssrA gene; the 2 termini fold to resemble tRNA(Ala) and it encodes a 'tag peptide', a short internal open reading frame. During trans-translation Ala-aminoacylated tmRNA acts like a tRNA, entering the A-site of stalled ribosomes, displacing the stalled mRNA. The ribosome then switches to translate the ORF on the tmRNA; the nascent peptide is terminated with the 'tag peptide' encoded by the tmRNA and targeted for degradation. The ribosome is freed to recommence translation, which seems to be the essential function of trans-translation. The protein is SsrA-binding protein of Lactococcus lactis subsp. lactis (strain IL1403) (Streptococcus lactis).